A 96-amino-acid chain; its full sequence is Neurotoxin 23 (96 aa).

An N-terminal signal peptide occupies residues Met1–Gln22. In terms of domain architecture, LCN-type CS-alpha/beta spans Phe26–Asn89. Disulfide bonds link Cys40-Cys63, Cys49-Cys68, and Cys53-Cys70.

This sequence belongs to the long (3 C-C) scorpion toxin superfamily. In terms of tissue distribution, expressed by the venom gland.

The protein localises to the secreted. This is Neurotoxin 23 from Lychas mucronatus (Chinese swimming scorpion).